The sequence spans 772 residues: Protein U58 (772 aa).

Belongs to the herpesviridae UL87 family.

The polypeptide is Protein U58 (U58) (Human herpesvirus 6B (strain Z29) (HHV-6 variant B)).